Reading from the N-terminus, the 334-residue chain is D-alanine--D-alanine ligase (334 aa).

The ATP-grasp domain occupies 114 to 314 (KRIWRFEGLP…YEELCLRILA (201 aa)). 140–195 (LEDLGSPMIVKPSREGSTIGLTKVTSPGQCEQAYRLASRYDPEVLCEQFIEGEETT) contacts ATP. The Mg(2+) site is built by Asp267, Glu281, and Asn283.

This sequence belongs to the D-alanine--D-alanine ligase family. It depends on Mg(2+) as a cofactor. Requires Mn(2+) as cofactor.

It is found in the cytoplasm. The catalysed reaction is 2 D-alanine + ATP = D-alanyl-D-alanine + ADP + phosphate + H(+). The protein operates within cell wall biogenesis; peptidoglycan biosynthesis. Functionally, cell wall formation. This is D-alanine--D-alanine ligase from Paracidovorax citrulli (strain AAC00-1) (Acidovorax citrulli).